The chain runs to 405 residues: 3-hydroxy-3-methylglutaryl-coenzyme A reductase (405 aa).

Residues Glu-101 and Asp-305 each act as charge relay system in the active site. The Proton donor role is filled by His-400.

Belongs to the HMG-CoA reductase family. Homodimer.

It localises to the cytoplasm. The catalysed reaction is (R)-mevalonate + 2 NADP(+) + CoA = (3S)-3-hydroxy-3-methylglutaryl-CoA + 2 NADPH + 2 H(+). Its pathway is metabolic intermediate biosynthesis; (R)-mevalonate biosynthesis; (R)-mevalonate from acetyl-CoA: step 3/3. Is competitively inhibited by lovastatin (formerly called mevinolin). Lovastatin also blocks the growth of H.salinarum, and this effect is reversed by addition of mevalonate, indicating the critical role that the mevalonate pathway plays in isoprenoid biosynthesis by these archaea. Functionally, catalyzes the NADPH-dependent reductive deacylation of (S)-3-hydroxy-3-methylglutaryl-CoA (HMG-CoA) to (R)-mevalonate. Cannot use NADH instead of NADPH. Functions in the mevalonate (MVA) pathway leading to isopentenyl diphosphate (IPP), a key precursor for the biosynthesis of isoprenoid compounds such as archaeal membrane lipids. This chain is 3-hydroxy-3-methylglutaryl-coenzyme A reductase (hmgA), found in Halobacterium salinarum (strain ATCC 29341 / DSM 671 / R1).